The chain runs to 815 residues: 1,4-alpha-glucan branching enzyme GlgB (815 aa).

The active-site Nucleophile is the Asp405. Glu458 functions as the Proton donor in the catalytic mechanism.

The protein belongs to the glycosyl hydrolase 13 family. GlgB subfamily. Monomer.

The catalysed reaction is Transfers a segment of a (1-&gt;4)-alpha-D-glucan chain to a primary hydroxy group in a similar glucan chain.. Its pathway is glycan biosynthesis; glycogen biosynthesis. In terms of biological role, catalyzes the formation of the alpha-1,6-glucosidic linkages in glycogen by scission of a 1,4-alpha-linked oligosaccharide from growing alpha-1,4-glucan chains and the subsequent attachment of the oligosaccharide to the alpha-1,6 position. In Histophilus somni (strain 2336) (Haemophilus somnus), this protein is 1,4-alpha-glucan branching enzyme GlgB.